A 132-amino-acid chain; its full sequence is Fatty acid-binding protein 1 (132 aa).

Residue alanine 2 is modified to N-acetylalanine.

Belongs to the calycin superfamily. Fatty-acid binding protein (FABP) family.

The chain is Fatty acid-binding protein 1 (FABP-1) from Fasciola gigantica (Giant liver fluke).